Reading from the N-terminus, the 770-residue chain is Arf-GAP with coiled-coil, ANK repeat and PH domain-containing protein 2 (770 aa).

Residues methionine 1–arginine 226 enclose the BAR domain. One can recognise a PH domain in the interval glycine 266–alanine 361. The disordered stretch occupies residues serine 371–serine 391. Residues serine 379 to glycine 388 show a composition bias toward polar residues. Residues serine 384 and serine 387 each carry the phosphoserine modification. The 122-residue stretch at glutamate 399–leucine 520 folds into the Arf-GAP domain. The segment at cysteine 414–cysteine 437 adopts a C4-type zinc-finger fold. The residue at position 521 (serine 521) is a Phosphoserine. Residues alanine 542–valine 572 form a disordered region. The span at valine 550–serine 561 shows a compositional bias: polar residues. Phosphoserine occurs at positions 573 and 576. 3 ANK repeats span residues asparagine 632–glutamine 661, glutamine 665–alanine 694, and glutamate 698–methionine 727. Tyrosine 734 bears the Phosphotyrosine mark. Phosphoserine is present on serine 767.

As to quaternary structure, interacts with RAB35 (GTP-bound form); the interaction is direct and probably recruits ACAP2 to membranes. Interacts with MICALL1; the interaction is indirect through RAB35.

The protein resides in the endosome membrane. The protein localises to the cell membrane. Its activity is regulated as follows. GAP activity stimulated by phosphatidylinositol 4,5-bisphosphate (PIP2) and phosphatidic acid. In terms of biological role, GTPase-activating protein (GAP) for ADP ribosylation factor 6 (ARF6). Doesn't show GAP activity for RAB35. In Mus musculus (Mouse), this protein is Arf-GAP with coiled-coil, ANK repeat and PH domain-containing protein 2 (Acap2).